Here is a 291-residue protein sequence, read N- to C-terminus: GTPase Era (291 aa).

One can recognise an Era-type G domain in the interval 2-167 (KSGFVSIIGR…LDEIVKYLDE (166 aa)). Residues 10–17 (GRTNAGKS) are G1. 10–17 (GRTNAGKS) serves as a coordination point for GTP. Residues 36-40 (NATRR) are G2. The G3 stretch occupies residues 57–60 (DTPG). GTP contacts are provided by residues 57 to 61 (DTPGL) and 116 to 119 (NKVD). The interval 116 to 119 (NKVD) is G4. Residues 146–148 (YSS) are G5. The 89-residue stretch at 186-274 (YRDFILESIY…LLKLFVTVKK (89 aa)) folds into the KH type-2 domain.

This sequence belongs to the TRAFAC class TrmE-Era-EngA-EngB-Septin-like GTPase superfamily. Era GTPase family. In terms of assembly, monomer.

It localises to the cytoplasm. The protein localises to the cell inner membrane. Its function is as follows. An essential GTPase that binds both GDP and GTP, with rapid nucleotide exchange. Plays a role in 16S rRNA processing and 30S ribosomal subunit biogenesis and possibly also in cell cycle regulation and energy metabolism. This Campylobacter jejuni (strain RM1221) protein is GTPase Era.